The following is a 337-amino-acid chain: Anthranilate phosphoribosyltransferase (337 aa).

5-phospho-alpha-D-ribose 1-diphosphate contacts are provided by residues glycine 82, 85-86, threonine 90, 92-95, 110-118, and serine 122; these read GD, NIST, and KHGGRSVSS. Position 82 (glycine 82) interacts with anthranilate. Serine 94 provides a ligand contact to Mg(2+). Arginine 168 lines the anthranilate pocket. Positions 226 and 227 each coordinate Mg(2+).

It belongs to the anthranilate phosphoribosyltransferase family. In terms of assembly, homodimer. Requires Mg(2+) as cofactor.

The catalysed reaction is N-(5-phospho-beta-D-ribosyl)anthranilate + diphosphate = 5-phospho-alpha-D-ribose 1-diphosphate + anthranilate. Its pathway is amino-acid biosynthesis; L-tryptophan biosynthesis; L-tryptophan from chorismate: step 2/5. Catalyzes the transfer of the phosphoribosyl group of 5-phosphorylribose-1-pyrophosphate (PRPP) to anthranilate to yield N-(5'-phosphoribosyl)-anthranilate (PRA). The polypeptide is Anthranilate phosphoribosyltransferase (Francisella tularensis subsp. holarctica (strain OSU18)).